A 73-amino-acid polypeptide reads, in one-letter code: uncharacterized protein (73 aa).

The next 2 helical transmembrane spans lie at 7 to 27 and 47 to 67; these read LFSSLTFSLTVLFLLLLIPNL and YFGYPSLGILFAGILSPIIIL.

It localises to the cell membrane. This is an uncharacterized protein from Methanocaldococcus jannaschii (strain ATCC 43067 / DSM 2661 / JAL-1 / JCM 10045 / NBRC 100440) (Methanococcus jannaschii).